A 308-amino-acid polypeptide reads, in one-letter code: MFFMSTVTVTVPATTANIGPGFDCIGAALTLYNQFTFTEQPEADTDLRITVTGTEAHRVSGDRTNLLYQAFTHLYDHLNKTPPKIAIDIKLGVPLARGLGSSATAIIGGLVGANELAGQPLSTAEIMELAIAIEGHPDNVVPALLGNCQLSVGEAENWEICQIPWHSDIIPVVAIPDFELSTEEARAVLPKTLSYGDAIFNIARMGLLIRALESGNEQWLNKAMADKLHQPYRQGLIEGYEFVQASALKAGAYGMVISGAGPTLLALTHPEKIQSVEKAMKNAWTQLEIVADVRSLSIDTQGANVNAH.

94–104 contacts ATP; the sequence is PLARGLGSSAT.

It belongs to the GHMP kinase family. Homoserine kinase subfamily.

Its subcellular location is the cytoplasm. It carries out the reaction L-homoserine + ATP = O-phospho-L-homoserine + ADP + H(+). It participates in amino-acid biosynthesis; L-threonine biosynthesis; L-threonine from L-aspartate: step 4/5. Functionally, catalyzes the ATP-dependent phosphorylation of L-homoserine to L-homoserine phosphate. In Crocosphaera subtropica (strain ATCC 51142 / BH68) (Cyanothece sp. (strain ATCC 51142)), this protein is Homoserine kinase.